A 338-amino-acid polypeptide reads, in one-letter code: uncharacterized protein (338 aa).

Positions 1–29 (MIKQLCKNITICTLALSTTFTVLPATSFA) are cleaved as a signal peptide.

The protein belongs to the aerolysin family.

This is an uncharacterized protein from Staphylococcus aureus (strain USA300).